Reading from the N-terminus, the 227-residue chain is Isopentenyl-diphosphate delta-isomerase 2 (227 aa).

K36 contributes to the substrate binding site. Mg(2+) is bound by residues H40 and H51. The region spanning 49-199 is the Nudix hydrolase domain; it reads LLHRAFSVVL…EVKVTPWLRT (151 aa). Substrate contacts are provided by R70 and K74. The active site involves S86. Residue S87 participates in substrate binding. Mg(2+)-binding residues include E146 and E148. Residue E148 is part of the active site. Positions 225–227 match the Microbody targeting signal motif; sequence HRV.

It belongs to the IPP isomerase type 1 family. It depends on Mg(2+) as a cofactor. Muscle-specific expression.

The protein localises to the peroxisome. It carries out the reaction isopentenyl diphosphate = dimethylallyl diphosphate. The protein operates within isoprenoid biosynthesis; dimethylallyl diphosphate biosynthesis; dimethylallyl diphosphate from isopentenyl diphosphate: step 1/1. In terms of biological role, catalyzes the 1,3-allylic rearrangement of the homoallylic substrate isopentenyl (IPP) to its highly electrophilic allylic isomer, dimethylallyl diphosphate (DMAPP). The sequence is that of Isopentenyl-diphosphate delta-isomerase 2 (IDI2) from Homo sapiens (Human).